A 206-amino-acid chain; its full sequence is Ubiquitin-conjugating enzyme E2 S (206 aa).

In terms of domain architecture, UBC core spans 14–160; sequence QTIRQVMKEL…ARMMTEIHAQ (147 aa). Cys98 (glycyl thioester intermediate) is an active-site residue. The tract at residues 165-191 is disordered; it reads GVSDAKDDDGPSNKKHAGLDKKLQDKK. Positions 168–191 are enriched in basic and acidic residues; the sequence is DAKDDDGPSNKKHAGLDKKLQDKK.

It belongs to the ubiquitin-conjugating enzyme family.

It carries out the reaction S-ubiquitinyl-[E1 ubiquitin-activating enzyme]-L-cysteine + [E2 ubiquitin-conjugating enzyme]-L-cysteine = [E1 ubiquitin-activating enzyme]-L-cysteine + S-ubiquitinyl-[E2 ubiquitin-conjugating enzyme]-L-cysteine.. It participates in protein modification; protein ubiquitination. In terms of biological role, catalyzes the covalent attachment of ubiquitin to other proteins. Acts as an essential factor of the anaphase promoting complex/cyclosome (APC/C), a cell cycle-regulated ubiquitin ligase that controls progression through mitosis. Acts by specifically elongating polyubiquitin chains initiated by the E2 enzyme vih/UbcH10 on APC/C substrates, enhancing the degradation of APC/C substrates by the proteasome and promoting mitotic exit. The protein is Ubiquitin-conjugating enzyme E2 S of Drosophila mojavensis (Fruit fly).